A 391-amino-acid polypeptide reads, in one-letter code: Acetylgalactosaminyl-O-glycosyl-glycoprotein beta-1,3-N-acetylglucosaminyltransferase (391 aa).

Topologically, residues 1–11 are cytoplasmic; the sequence is MALPSSRRFKS. A helical; Signal-anchor for type II membrane protein membrane pass occupies residues 12–32; that stretch reads PTTLAFFLVGVTLVVLNQWFL. Residues 33–391 are Lumenal-facing; it reads QEHRQEKAKG…TAGEQNPDAH (359 aa). N-linked (GlcNAc...) asparagine glycans are attached at residues N68 and N191.

This sequence belongs to the glycosyltransferase 31 family.

Its subcellular location is the golgi apparatus membrane. It catalyses the reaction a 3-O-[N-acetyl-alpha-D-galactosaminyl]-L-threonyl-[protein] + UDP-N-acetyl-alpha-D-glucosamine = a 3-O-[N-acetyl-beta-D-glucosaminyl-(1-&gt;3)-N-acetyl-alpha-D-galactosaminyl]-L-threonyl-[protein] + UDP + H(+). The enzyme catalyses a 3-O-[N-acetyl-alpha-D-galactosaminyl]-L-seryl-[protein] + UDP-N-acetyl-alpha-D-glucosamine = 3-O-[N-acetyl-beta-D-glucosaminyl-(1-&gt;3)-N-acetyl-alpha-D-galactosaminyl]-L-seryl-[protein] + UDP + H(+). It functions in the pathway protein modification; protein glycosylation. Beta-1,3-N-acetylglucosaminyltransferase that synthesizes the core 3 structure of the O-glycan, an important precursor in the biosynthesis of mucin-type glycoproteins. Plays an important role in the synthesis of mucin-type O-glycans in digestive organs. The chain is Acetylgalactosaminyl-O-glycosyl-glycoprotein beta-1,3-N-acetylglucosaminyltransferase (B3gnt6) from Mus musculus (Mouse).